We begin with the raw amino-acid sequence, 408 residues long: Argininosuccinate synthase (408 aa).

Residues 10 to 18 and Ala37 contribute to the ATP site; that span reads AYSGGLDTS. Positions 90 and 95 each coordinate L-citrulline. Gly120 lines the ATP pocket. Residues Thr122, Asn126, and Asp127 each contribute to the L-aspartate site. Residue Asn126 coordinates L-citrulline. 5 residues coordinate L-citrulline: Arg130, Ser182, Ser191, Glu267, and Tyr279.

The protein belongs to the argininosuccinate synthase family. Type 1 subfamily. Homotetramer.

It is found in the cytoplasm. The enzyme catalyses L-citrulline + L-aspartate + ATP = 2-(N(omega)-L-arginino)succinate + AMP + diphosphate + H(+). The protein operates within amino-acid biosynthesis; L-arginine biosynthesis; L-arginine from L-ornithine and carbamoyl phosphate: step 2/3. The chain is Argininosuccinate synthase from Paraburkholderia xenovorans (strain LB400).